Reading from the N-terminus, the 326-residue chain is Archaeal actin homolog (326 aa).

ATP is bound by residues 10–14 (YGDTK), Ser179, Gln231, 285–288 (GGAN), and Gln311.

This sequence belongs to the thermophilic archaeal actin family.

Polymerizes into bundles of filaments. Polymerization requires NTP and is optimal with ATP, but GTP, UTP, CTP, and even the deoxy form of NTP can also support the polymerization reaction. The polypeptide is Archaeal actin homolog (Thermoplasma volcanium (strain ATCC 51530 / DSM 4299 / JCM 9571 / NBRC 15438 / GSS1)).